The following is a 147-amino-acid chain: 3-hydroxyacyl-[acyl-carrier-protein] dehydratase FabZ (147 aa).

Residue His53 is part of the active site.

Belongs to the thioester dehydratase family. FabZ subfamily.

The protein localises to the cytoplasm. The enzyme catalyses a (3R)-hydroxyacyl-[ACP] = a (2E)-enoyl-[ACP] + H2O. Its function is as follows. Involved in unsaturated fatty acids biosynthesis. Catalyzes the dehydration of short chain beta-hydroxyacyl-ACPs and long chain saturated and unsaturated beta-hydroxyacyl-ACPs. This chain is 3-hydroxyacyl-[acyl-carrier-protein] dehydratase FabZ, found in Synechococcus sp. (strain WH7803).